Reading from the N-terminus, the 403-residue chain is MALRTLDSLGSLAGKRVVVRCDLNVPLKDGKITDDGRVRASIPTLHALIAQGAKVAIVSHLGRPEGAPDAQYSLAPVAQRLSELLGKPVTFASDTVGAGAAEAVSGLEDGDVALLENLRFNPGETSKDEGEREAFAAELAAFGDAFVSDGFGVVHRKQASVYELAKALPSAAGALIATELDVLDRLTENPERPYTVLLGGSKVSDKLGVIGHLLPRVDSLLIGGGMLFTFLAALGHRVGSSLLEADQIGTVKGYLEQAKQLGVEIVLPRDVVVASRFGVDAEHLVRPVDRIEDTGWGTSGLGLDIGPETAEVFSERIRAARTVFWNGPMGVFELAPFAAGTKAVAQALTEVDGLGVVGGGDSAAAVHALGFSDDQFGHISTGGGASLEFLEGKRLPGLEVLGW.

Residues 22-24 (DLN), arginine 37, 60-63 (HLGR), arginine 119, and arginine 156 contribute to the substrate site. ATP is bound by residues lysine 206, glycine 302, glutamate 333, and 359–362 (GGDS).

This sequence belongs to the phosphoglycerate kinase family. As to quaternary structure, monomer.

The protein resides in the cytoplasm. It catalyses the reaction (2R)-3-phosphoglycerate + ATP = (2R)-3-phospho-glyceroyl phosphate + ADP. It participates in carbohydrate degradation; glycolysis; pyruvate from D-glyceraldehyde 3-phosphate: step 2/5. The sequence is that of Phosphoglycerate kinase from Leifsonia xyli subsp. xyli (strain CTCB07).